A 158-amino-acid polypeptide reads, in one-letter code: SsrA-binding protein (158 aa).

It belongs to the SmpB family.

It is found in the cytoplasm. Required for rescue of stalled ribosomes mediated by trans-translation. Binds to transfer-messenger RNA (tmRNA), required for stable association of tmRNA with ribosomes. tmRNA and SmpB together mimic tRNA shape, replacing the anticodon stem-loop with SmpB. tmRNA is encoded by the ssrA gene; the 2 termini fold to resemble tRNA(Ala) and it encodes a 'tag peptide', a short internal open reading frame. During trans-translation Ala-aminoacylated tmRNA acts like a tRNA, entering the A-site of stalled ribosomes, displacing the stalled mRNA. The ribosome then switches to translate the ORF on the tmRNA; the nascent peptide is terminated with the 'tag peptide' encoded by the tmRNA and targeted for degradation. The ribosome is freed to recommence translation, which seems to be the essential function of trans-translation. This Caldicellulosiruptor bescii (strain ATCC BAA-1888 / DSM 6725 / KCTC 15123 / Z-1320) (Anaerocellum thermophilum) protein is SsrA-binding protein.